We begin with the raw amino-acid sequence, 196 residues long: Recombination protein RecR (196 aa).

Residues 56-71 form a C4-type zinc finger; the sequence is CPVCGGLDSQQPCMIC. One can recognise a Toprim domain in the interval 78–172; it reads PLICVVETVA…SVTRLAQGVP (95 aa).

This sequence belongs to the RecR family.

May play a role in DNA repair. It seems to be involved in an RecBC-independent recombinational process of DNA repair. It may act with RecF and RecO. The protein is Recombination protein RecR of Acidiphilium cryptum (strain JF-5).